The following is a 404-amino-acid chain: Cysteine desulfurase IscS (404 aa).

Pyridoxal 5'-phosphate is bound by residues 75-76 (AT), Asn155, Gln183, and 203-205 (SAH). Lys206 carries the N6-(pyridoxal phosphate)lysine modification. Position 243 (Thr243) interacts with pyridoxal 5'-phosphate. Residue Cys328 is the Cysteine persulfide intermediate of the active site. Cys328 contacts [2Fe-2S] cluster.

It belongs to the class-V pyridoxal-phosphate-dependent aminotransferase family. NifS/IscS subfamily. Homodimer. Forms a heterotetramer with IscU, interacts with other sulfur acceptors. The cofactor is pyridoxal 5'-phosphate.

The protein localises to the cytoplasm. The enzyme catalyses (sulfur carrier)-H + L-cysteine = (sulfur carrier)-SH + L-alanine. Its pathway is cofactor biosynthesis; iron-sulfur cluster biosynthesis. Master enzyme that delivers sulfur to a number of partners involved in Fe-S cluster assembly, tRNA modification or cofactor biosynthesis. Catalyzes the removal of elemental sulfur atoms from cysteine to produce alanine. Functions as a sulfur delivery protein for Fe-S cluster synthesis onto IscU, an Fe-S scaffold assembly protein, as well as other S acceptor proteins. This is Cysteine desulfurase IscS from Pseudomonas putida (strain ATCC 700007 / DSM 6899 / JCM 31910 / BCRC 17059 / LMG 24140 / F1).